The sequence spans 1726 residues: Protein NLRC5 (1726 aa).

Positions 207–537 (RVVMLSGQAG…THLTIQEFMA (331 aa)) constitute an NACHT domain. Position 213–220 (213–220 (GQAGSGKT)) interacts with ATP. 18 LRR repeats span residues 879–902 (LTVLNLSHNALGNRGLKKLLEHLP), 904–925 (LDTIQEINVSDNGVDMDGVVLL), 1002–1025 (NLDFSHGTLKDESTEKLLKFLPNM), 1026–1048 (ASLNLLNLSHIQMSTDSALLLVQ), 1103–1126 (CHHLTDLDLSSNFLKDEDVKTFVQ), 1128–1155 (LPKLQISGSVSLNNNNLTEVGVLYLLSL), 1212–1235 (LNSVQTLELRNNSFSADTIKYLIT), 1351–1374 (AEFLSSVLPSLKNLKILSLSSKGE), 1387–1411 (AQKHLEQLSLAHHVIKDRGAAVLGN), 1421–1443 (SLSLLKCLDWTATGGRDLVRGLV), 1447–1468 (SLEEIRLDSIELDEESIDCFAQ), 1502–1525 (LIELEEIELIGLRMGDRGVEELVK), 1532–1553 (RLRKINLSENRVSDHAGEMLVK), 1560–1580 (ALQQIHLFRNNLGHSSAAVLG), 1588–1609 (ELTELDLSENQMESKGCSSVCE), 1616–1637 (ALKKLHLTSIGTSDLVNVASCL), 1642–1662 (SIEDISLSWNNCENDVVLKLA), and 1670–1691 (KLKRLDLEANNINTSGAMALAT).

Belongs to the NLRP family.

It is found in the cytoplasm. Its function is as follows. Probable regulator of the NF-kappa-B and type I interferon signaling pathways. May also regulate the type II interferon signaling pathway. Plays a role in homeostatic control of innate immunity and in antiviral defense mechanisms. The protein is Protein NLRC5 (nlrc5) of Ictalurus punctatus (Channel catfish).